The sequence spans 157 residues: Small ribosomal subunit protein uS7c (157 aa).

It belongs to the universal ribosomal protein uS7 family. As to quaternary structure, part of the 30S ribosomal subunit.

It is found in the plastid. It localises to the organellar chromatophore. Functionally, one of the primary rRNA binding proteins, it binds directly to 16S rRNA where it nucleates assembly of the head domain of the 30S subunit. This chain is Small ribosomal subunit protein uS7c (rps7), found in Paulinella chromatophora.